Consider the following 526-residue polypeptide: Amine oxidase [flavin-containing] A (526 aa).

M1 bears the N-acetylmethionine mark. Topologically, residues 1 to 497 (MTDLEKPNLA…HTFLERNLPS (497 aa)) are cytoplasmic. Residue S383 is modified to Phosphoserine. C406 is modified (S-8alpha-FAD cysteine). Residues 498-518 (VPGLLKITGVSTSVALLCFVL) traverse the membrane as a helical; Anchor for type IV membrane protein segment. Over 519–526 (YKIKKLPC) the chain is Mitochondrial intermembrane. The interval 520 to 522 (KIK) is interaction with membrane phospholipid headgroups.

It belongs to the flavin monoamine oxidase family. As to quaternary structure, monomer, homo- or heterodimer (containing two subunits of similar size). Each subunit contains a covalently bound flavin. Enzymatically active as monomer. It depends on FAD as a cofactor.

It localises to the mitochondrion outer membrane. The enzyme catalyses a secondary aliphatic amine + O2 + H2O = a primary amine + an aldehyde + H2O2. It catalyses the reaction a primary methyl amine + O2 + H2O = an aldehyde + H2O2 + NH4(+). The catalysed reaction is (R)-adrenaline + O2 + H2O = (R)-3,4-dihydroxymandelaldehyde + methylamine + H2O2. It carries out the reaction dopamine + O2 + H2O = 3,4-dihydroxyphenylacetaldehyde + H2O2 + NH4(+). The enzyme catalyses tyramine + O2 + H2O = (4-hydroxyphenyl)acetaldehyde + H2O2 + NH4(+). It catalyses the reaction (R)-noradrenaline + O2 + H2O = (R)-3,4-dihydroxymandelaldehyde + H2O2 + NH4(+). The catalysed reaction is serotonin + O2 + H2O = (5-hydroxyindol-3-yl)acetaldehyde + H2O2 + NH4(+). It carries out the reaction kynuramine + O2 + H2O = 3-(2-aminophenyl)-3-oxopropanal + H2O2 + NH4(+). The enzyme catalyses tryptamine + O2 + H2O = indole-3-acetaldehyde + H2O2 + NH4(+). It catalyses the reaction 2-phenylethylamine + O2 + H2O = 2-phenylacetaldehyde + H2O2 + NH4(+). Catalyzes the oxidative deamination of primary and some secondary amine such as neurotransmitters, with concomitant reduction of oxygen to hydrogen peroxide and has important functions in the metabolism of neuroactive and vasoactive amines in the central nervous system and peripheral tissues. Preferentially oxidizes serotonin. Also catalyzes the oxidative deamination of kynuramine to 3-(2-aminophenyl)-3-oxopropanal that can spontaneously condense to 4-hydroxyquinoline. The polypeptide is Amine oxidase [flavin-containing] A (Rattus norvegicus (Rat)).